Here is a 481-residue protein sequence, read N- to C-terminus: Glutamine synthetase (481 aa).

The 85-residue stretch at 22–106 (NEVEFVDFRF…VFCDVYDVYK (85 aa)) folds into the GS beta-grasp domain. In terms of domain architecture, GS catalytic spans 114–481 (PRSIAKKALK…PFEFITTYSC (368 aa)). Residues Glu-139, Glu-141, Glu-223, and Glu-230 each contribute to the Mg(2+) site. L-glutamate-binding positions include 274–275 (NG) and Gly-275. Residue His-279 participates in Mg(2+) binding. Residues 281-283 (HVS) and Ser-283 each bind ATP. L-glutamate-binding residues include Arg-331, Glu-337, and Arg-349. ATP-binding residues include Arg-349 and Arg-354. Mg(2+) is bound at residue Glu-367. Position 369 (Arg-369) interacts with L-glutamate.

It belongs to the glutamine synthetase family. In terms of assembly, oligomer of 12 subunits arranged in the form of two hexameric ring. Mg(2+) is required as a cofactor.

It is found in the cytoplasm. It carries out the reaction L-glutamate + NH4(+) + ATP = L-glutamine + ADP + phosphate + H(+). The activity of this enzyme could be controlled by adenylation under conditions of abundant glutamine. In terms of biological role, catalyzes the ATP-dependent biosynthesis of glutamine from glutamate and ammonia. The sequence is that of Glutamine synthetase from Helicobacter pylori (strain J99 / ATCC 700824) (Campylobacter pylori J99).